Consider the following 575-residue polypeptide: DNA-directed RNA polymerase subunit beta' (575 aa).

The protein belongs to the RNA polymerase beta' chain family. In terms of assembly, in plastids the minimal PEP RNA polymerase catalytic core is composed of four subunits: alpha, beta, beta', and beta''. When a (nuclear-encoded) sigma factor is associated with the core the holoenzyme is formed, which can initiate transcription.

It localises to the plastid. The protein resides in the apicoplast. The enzyme catalyses RNA(n) + a ribonucleoside 5'-triphosphate = RNA(n+1) + diphosphate. DNA-dependent RNA polymerase catalyzes the transcription of DNA into RNA using the four ribonucleoside triphosphates as substrates. The polypeptide is DNA-directed RNA polymerase subunit beta' (rpoC1) (Plasmodium falciparum (isolate 3D7)).